Reading from the N-terminus, the 222-residue chain is LexA repressor (222 aa).

The H-T-H motif DNA-binding region spans 28–48 (IREIGEHMDIRSTNGVNDHLK). Catalysis depends on for autocatalytic cleavage activity residues Ser-135 and Lys-172.

This sequence belongs to the peptidase S24 family. As to quaternary structure, homodimer.

It carries out the reaction Hydrolysis of Ala-|-Gly bond in repressor LexA.. In terms of biological role, represses a number of genes involved in the response to DNA damage (SOS response), including recA and lexA. In the presence of single-stranded DNA, RecA interacts with LexA causing an autocatalytic cleavage which disrupts the DNA-binding part of LexA, leading to derepression of the SOS regulon and eventually DNA repair. The chain is LexA repressor from Myxococcus xanthus (strain DK1622).